The sequence spans 1226 residues: 3-hydroxy-3-methylglutaryl-coenzyme A reductase (1226 aa).

5 consecutive transmembrane segments (helical) span residues 17–37 (IETI…ILSG), 224–244 (ILVV…LFLA), 252–272 (FWLS…TLPM), 337–357 (VGNM…VGVN), and 373–393 (LLAM…TIMV). The SSD domain occupies 223-391 (DILVVLTGYI…FTLYTAVLTI (169 aa)). Residues 428–449 (LSRKSSKQSVTEPETTKNLRQR) form a disordered region. The span at 434–445 (KQSVTEPETTKN) shows a compositional bias: polar residues. The helical transmembrane segment at 481-501 (LLLIASFLTLHILNFCTTLTS) threads the bilayer. Disordered regions lie at residues 683-702 (APAP…PPPL) and 722-742 (LPIR…EVEP). A compositionally biased stretch (pro residues) spans 685 to 702 (APAPAPEPEPPVNRPPPL). Residue glutamate 869 is the Charge relay system of the active site. 875–881 (STSRGCK) contacts CoA. Residues 936–938 (SRF) and 963–971 (DAMGMNMIS) contribute to the NADP(+) site. Residue lysine 1001 is the Charge relay system of the active site. Position 1030 to 1032 (1030 to 1032 (VLK)) interacts with CoA. Aspartate 1077 acts as the Charge relay system in catalysis. A helical membrane pass occupies residues 1150–1170 (IIASAVMAGELSLISALAAGH). 1174–1175 (AH) is a binding site for CoA. Histidine 1175 (proton donor) is an active-site residue. NADP(+) is bound at residue 1179 to 1180 (NR). A disordered region spans residues 1182–1226 (QLNTPMPSRPHTPGPEDVSHVQQLPTPSASDDKGVTAQGYVVEAK). A compositionally biased stretch (polar residues) spans 1201 to 1210 (HVQQLPTPSA).

Belongs to the HMG-CoA reductase family.

It localises to the endoplasmic reticulum membrane. It carries out the reaction (R)-mevalonate + 2 NADP(+) + CoA = (3S)-3-hydroxy-3-methylglutaryl-CoA + 2 NADPH + 2 H(+). It functions in the pathway metabolic intermediate biosynthesis; (R)-mevalonate biosynthesis; (R)-mevalonate from acetyl-CoA: step 3/3. HMG-CoA reductase; part of the first module of ergosterol biosynthesis pathway that includes the early steps of the pathway, conserved across all eukaryotes, and which results in the formation of mevalonate from acetyl-coenzyme A (acetyl-CoA). This module also plays a key role in the biosynthesis of triterpenes such as ganoderic acids (GA), a group of highly oxygenated lanostane-type triterpenoids which are well recognized as a main group of unique bioactive compounds in the medicinal mushroom Ganoderma lucidum. In this module, the acetyl-CoA acetyltransferase catalyzes the formation of acetoacetyl-CoA. The hydroxymethylglutaryl-CoA synthase HMGS then condenses acetyl-CoA with acetoacetyl-CoA to form HMG-CoA. The rate-limiting step of the early module is the reduction to mevalonate by the 3-hydroxy-3-methylglutaryl-coenzyme A (HMG-CoA) reductase. The chain is 3-hydroxy-3-methylglutaryl-coenzyme A reductase from Ganoderma lucidum (Ling zhi medicinal fungus).